We begin with the raw amino-acid sequence, 395 residues long: Major outer membrane protein P.IA (395 aa).

Residues 1-19 (MRKKLTALVLSALPLAAVA) form the signal peptide.

It belongs to the Gram-negative porin family. As to quaternary structure, homotrimer.

The protein localises to the cell outer membrane. In terms of biological role, serves as a slightly cation selective porin. Major antigen on the gonococcal cell surface and it may have pathogenic properties in addition to its porin activity. The sequence is that of Major outer membrane protein P.IA (porA) from Neisseria meningitidis serogroup A / serotype 4A (strain DSM 15465 / Z2491).